Reading from the N-terminus, the 97-residue chain is U-scoloptoxin(10)-Sa2a (97 aa).

A signal peptide spans 1–23 (MNKSMLIFFTILFLTYIIEEKEA).

This sequence belongs to the scoloptoxin-10 family. In terms of processing, contains 3 disulfide bonds. Expressed by the venom gland.

The protein resides in the secreted. This chain is U-scoloptoxin(10)-Sa2a, found in Scolopendra alternans (Florida Keys giant centipede).